We begin with the raw amino-acid sequence, 101 residues long: CRISPR-associated endoribonuclease Cas2 (101 aa).

Asp8 serves as a coordination point for Mg(2+).

This sequence belongs to the CRISPR-associated endoribonuclease Cas2 protein family. In terms of assembly, homodimer, forms a heterotetramer with a Cas1 homodimer. Mg(2+) serves as cofactor.

In terms of biological role, CRISPR (clustered regularly interspaced short palindromic repeat), is an adaptive immune system that provides protection against mobile genetic elements (viruses, transposable elements and conjugative plasmids). CRISPR clusters contain sequences complementary to antecedent mobile elements and target invading nucleic acids. CRISPR clusters are transcribed and processed into CRISPR RNA (crRNA). Functions as a ssRNA-specific endoribonuclease. Involved in the integration of spacer DNA into the CRISPR cassette. In Ligilactobacillus salivarius (strain UCC118) (Lactobacillus salivarius), this protein is CRISPR-associated endoribonuclease Cas2.